The sequence spans 532 residues: Putative 57 kDa heat shock protein (532 aa).

2 consecutive sHSP domains span residues 25 to 134 and 439 to 532; these read VNGP…CKIT and SVLE…IPSN.

Belongs to the small heat shock protein (HSP20) family.

The chain is Putative 57 kDa heat shock protein from Arabidopsis thaliana (Mouse-ear cress).